A 369-amino-acid chain; its full sequence is Glutamate 5-kinase (369 aa).

Residue lysine 8 coordinates ATP. Serine 49, aspartate 136, and asparagine 148 together coordinate substrate. ATP is bound by residues 168–169 and 211–217; these read TD and TGGMATK. A PUA domain is found at 276–354; it reads KGELWLDEGA…TELANILGYA (79 aa).

Belongs to the glutamate 5-kinase family.

It is found in the cytoplasm. The catalysed reaction is L-glutamate + ATP = L-glutamyl 5-phosphate + ADP. It functions in the pathway amino-acid biosynthesis; L-proline biosynthesis; L-glutamate 5-semialdehyde from L-glutamate: step 1/2. In terms of biological role, catalyzes the transfer of a phosphate group to glutamate to form L-glutamate 5-phosphate. This is Glutamate 5-kinase from Thermosynechococcus vestitus (strain NIES-2133 / IAM M-273 / BP-1).